The chain runs to 75 residues: Small ribosomal subunit protein bS18 (75 aa).

It belongs to the bacterial ribosomal protein bS18 family. Part of the 30S ribosomal subunit. Forms a tight heterodimer with protein bS6.

Binds as a heterodimer with protein bS6 to the central domain of the 16S rRNA, where it helps stabilize the platform of the 30S subunit. In Legionella pneumophila (strain Paris), this protein is Small ribosomal subunit protein bS18.